A 100-amino-acid polypeptide reads, in one-letter code: Small ribosomal subunit protein uS14c (100 aa).

It belongs to the universal ribosomal protein uS14 family. Part of the 30S ribosomal subunit.

The protein resides in the plastid. The protein localises to the chloroplast. Binds 16S rRNA, required for the assembly of 30S particles. The chain is Small ribosomal subunit protein uS14c from Arabis hirsuta (Hairy rock-cress).